The chain runs to 187 residues: Pyridoxal 5'-phosphate synthase subunit PdxT (187 aa).

47-49 (GES) contacts L-glutamine. Cys-76 serves as the catalytic Nucleophile. Residues Arg-102 and 128–129 (IR) contribute to the L-glutamine site. Residues His-165 and Glu-167 each act as charge relay system in the active site.

The protein belongs to the glutaminase PdxT/SNO family. In terms of assembly, in the presence of PdxS, forms a dodecamer of heterodimers. Only shows activity in the heterodimer.

It catalyses the reaction aldehydo-D-ribose 5-phosphate + D-glyceraldehyde 3-phosphate + L-glutamine = pyridoxal 5'-phosphate + L-glutamate + phosphate + 3 H2O + H(+). The enzyme catalyses L-glutamine + H2O = L-glutamate + NH4(+). The protein operates within cofactor biosynthesis; pyridoxal 5'-phosphate biosynthesis. In terms of biological role, catalyzes the hydrolysis of glutamine to glutamate and ammonia as part of the biosynthesis of pyridoxal 5'-phosphate. The resulting ammonia molecule is channeled to the active site of PdxS. This is Pyridoxal 5'-phosphate synthase subunit PdxT from Methanococcus maripaludis (strain DSM 14266 / JCM 13030 / NBRC 101832 / S2 / LL).